We begin with the raw amino-acid sequence, 485 residues long: Rhamnulokinase (485 aa).

12–16 contacts ATP; that stretch reads ATSGR. Residues glycine 80 and 238-240 each bind substrate; that span reads HDT. The active-site Proton acceptor is aspartate 239. Position 261 (threonine 261) interacts with ATP. Asparagine 298 serves as a coordination point for substrate. Glutamate 306 serves as a coordination point for ATP. Cysteine 355 and cysteine 372 are disulfide-bonded. An ATP-binding site is contributed by glycine 404.

This sequence belongs to the rhamnulokinase family. Mg(2+) is required as a cofactor.

The catalysed reaction is L-rhamnulose + ATP = L-rhamnulose 1-phosphate + ADP + H(+). It participates in carbohydrate degradation; L-rhamnose degradation; glycerone phosphate from L-rhamnose: step 2/3. Functionally, involved in the catabolism of L-rhamnose (6-deoxy-L-mannose). Catalyzes the transfer of the gamma-phosphate group from ATP to the 1-hydroxyl group of L-rhamnulose to yield L-rhamnulose 1-phosphate. In Bacteroides thetaiotaomicron (strain ATCC 29148 / DSM 2079 / JCM 5827 / CCUG 10774 / NCTC 10582 / VPI-5482 / E50), this protein is Rhamnulokinase.